Reading from the N-terminus, the 222-residue chain is Small ribosomal subunit protein uS7m (222 aa).

This sequence belongs to the universal ribosomal protein uS7 family. In terms of assembly, part of the small ribosomal subunit.

It is found in the mitochondrion. In terms of biological role, one of the primary rRNA binding proteins, it binds directly to 18S rRNA where it nucleates assembly of the head domain of the small subunit. The sequence is that of Small ribosomal subunit protein uS7m (RPS7) from Prototheca wickerhamii.